Reading from the N-terminus, the 695-residue chain is ATP-dependent zinc metalloprotease FtsH (695 aa).

Topologically, residues 1–15 (MNNNKQPKQGNFVKN) are cytoplasmic. A helical transmembrane segment spans residues 16–36 (ILMWVILAIVVVVGFNFFFSS). The Extracellular segment spans residues 37–139 (NQSSVDKISY…QASSSGMWVQ (103 aa)). A helical membrane pass occupies residues 140-160 (ILSYIIPMLLFVGIFWLMMGG). The Cytoplasmic portion of the chain corresponds to 161-695 (MGARGGGGGG…KEKSEDETAE (535 aa)). 233-240 (GPPGTGKT) is a binding site for ATP. H456 provides a ligand contact to Zn(2+). E457 is a catalytic residue. The Zn(2+) site is built by H460 and D532. Positions 657–695 (KDANANVDDFSNINIYNGDEKTDSKPEENKEKSEDETAE) are disordered. The segment covering 674–695 (GDEKTDSKPEENKEKSEDETAE) has biased composition (basic and acidic residues).

In the central section; belongs to the AAA ATPase family. The protein in the C-terminal section; belongs to the peptidase M41 family. In terms of assembly, homohexamer. Zn(2+) serves as cofactor.

It is found in the cell membrane. In terms of biological role, acts as a processive, ATP-dependent zinc metallopeptidase for both cytoplasmic and membrane proteins. Plays a role in the quality control of integral membrane proteins. The chain is ATP-dependent zinc metalloprotease FtsH from Lactococcus lactis subsp. lactis (strain IL1403) (Streptococcus lactis).